Reading from the N-terminus, the 386-residue chain is Phosphoglycerate kinase (386 aa).

Residues 21–23, R36, 59–62, R113, and R146 contribute to the substrate site; these read DLN and HLGR. Residues K197, E314, and 340–343 each bind ATP; that span reads GGDT.

The protein belongs to the phosphoglycerate kinase family. As to quaternary structure, monomer.

Its subcellular location is the cytoplasm. It carries out the reaction (2R)-3-phosphoglycerate + ATP = (2R)-3-phospho-glyceroyl phosphate + ADP. Its pathway is carbohydrate degradation; glycolysis; pyruvate from D-glyceraldehyde 3-phosphate: step 2/5. The polypeptide is Phosphoglycerate kinase (Vibrio campbellii (strain ATCC BAA-1116)).